Reading from the N-terminus, the 185-residue chain is Capsid protein (185 aa).

The interval 136-185 (NAPILSTLPETTVVRRRDRGRSPRRRTPSPRRRRSPSPRRRRSQSRESQC) is disordered. Residues 149 to 178 (VRRRDRGRSPRRRTPSPRRRRSPSPRRRRS) are compositionally biased toward basic residues. Phosphoserine; by host occurs at positions 157, 164, and 172. The stretch at 157 to 163 (SPRRRTP) is one 1; half-length repeat. The interval 157 to 179 (SPRRRTPSPRRRRSPSPRRRRSQ) is 3 X 8 AA repeats of S-P-R-R-R-[PR]-S-Q. A Bipartite nuclear localization signal motif is present at residues 160 to 177 (RRTPSPRRRRSPSPRRRR). Tandem repeats lie at residues 164–171 (SPRRRRSP) and 172–179 (SPRRRRSQ). The tract at residues 179 to 185 (QSRESQC) is RNA binding.

This sequence belongs to the orthohepadnavirus core antigen family. Homodimerizes, then multimerizes. Interacts with cytosol exposed regions of viral L glycoprotein present in the reticulum-to-Golgi compartment. Interacts with human FLNB. Phosphorylated form interacts with host importin alpha; this interaction depends on the exposure of the NLS, which itself depends upon genome maturation and/or phosphorylation of the capsid protein. Interacts with host NUP153. Post-translationally, phosphorylated by host SRPK1, SRPK2, and maybe protein kinase C or GAPDH. Phosphorylation is critical for pregenomic RNA packaging. Protein kinase C phosphorylation is stimulated by HBx protein and may play a role in transport of the viral genome to the nucleus at the late step during the viral replication cycle.

The protein localises to the virion. It localises to the host cytoplasm. Self assembles to form an icosahedral capsid. Most capsids appear to be large particles with an icosahedral symmetry of T=4 and consist of 240 copies of capsid protein, though a fraction forms smaller T=3 particles consisting of 180 capsid proteins. Entering capsids are transported along microtubules to the nucleus. Phosphorylation of the capsid is thought to induce exposure of nuclear localization signal in the C-terminal portion of the capsid protein that allows binding to the nuclear pore complex via the importin (karyopherin-) alpha and beta. Capsids are imported in intact form through the nuclear pore into the nuclear basket, where it probably binds NUP153. Only capsids that contain the mature viral genome can release the viral DNA and capsid protein into the nucleoplasm. Immature capsids get stuck in the basket. Capsids encapsulate the pre-genomic RNA and the P protein. Pre-genomic RNA is reverse-transcribed into DNA while the capsid is still in the cytoplasm. The capsid can then either be directed to the nucleus, providing more genomes for transcription, or bud through the endoplasmic reticulum to provide new virions. This Hepatitis B virus genotype A2 subtype adw2 (strain Rutter 1979) (HBV-A) protein is Capsid protein.